Consider the following 111-residue polypeptide: Iron-sulfur cluster assembly protein CyaY (111 aa).

This sequence belongs to the frataxin family.

Functionally, involved in iron-sulfur (Fe-S) cluster assembly. May act as a regulator of Fe-S biogenesis. The chain is Iron-sulfur cluster assembly protein CyaY from Cupriavidus necator (strain ATCC 17699 / DSM 428 / KCTC 22496 / NCIMB 10442 / H16 / Stanier 337) (Ralstonia eutropha).